A 460-amino-acid polypeptide reads, in one-letter code: Hemopexin (460 aa).

A signal peptide spans M1–A23. N-linked (GlcNAc...) asparagine glycosylation is found at N38 and N64. Disulfide bonds link C50-C230, C148-C153, and C187-C199. Hemopexin repeat units follow at residues A53–P93, V94–I138, P139–A183, and V184–C230. H79 is a heme binding site. Residue H149 participates in heme binding. An N-linked (GlcNAc...) asparagine glycan is attached at N186. H235 is a heme binding site. N240 and N246 each carry an N-linked (GlcNAc...) asparagine glycan. Cystine bridges form between C255/C458, C364/C406, and C416/C433. Hemopexin repeat units lie at residues A257–G302, P303–P350, L355–L394, and H398–Q448. Heme is bound at residue H291.

This sequence belongs to the hemopexin family. In terms of tissue distribution, expressed by the liver and secreted in plasma.

Its subcellular location is the secreted. In terms of biological role, binds heme and transports it to the liver for breakdown and iron recovery, after which the free hemopexin returns to the circulation. The sequence is that of Hemopexin (Hpx) from Rattus norvegicus (Rat).